A 559-amino-acid chain; its full sequence is S-layer protein (559 aa).

A signal peptide spans 1-28 (MAMSLKKIGAIAVGGAMVASALASGVMA). Asn108, Asn130, Asn155, Asn222, and Asn373 each carry an N-linked (GlcNAc...) asparagine glycan.

Belongs to the Mj S-layer protein family.

Its subcellular location is the secreted. The protein localises to the cell wall. The protein resides in the S-layer. Its function is as follows. S-layer protein. The S-layer is a paracrystalline mono-layered assembly of proteins which coat the surface of the cell. The sequence is that of S-layer protein from Methanothermococcus thermolithotrophicus (Methanococcus thermolithotrophicus).